The primary structure comprises 149 residues: HTH-type transcriptional regulator LrpB (149 aa).

One can recognise an HTH asnC-type domain in the interval isoleucine 3–serine 64. Positions tryptophan 22–lysine 41 form a DNA-binding region, H-T-H motif.

Its function is as follows. Negative regulation of glyA transcription and kinB-dependent sporulation. The chain is HTH-type transcriptional regulator LrpB (lrpB) from Bacillus subtilis (strain 168).